Reading from the N-terminus, the 428-residue chain is Serine hydroxymethyltransferase (428 aa).

(6S)-5,6,7,8-tetrahydrofolate is bound at residue Gly-120–Ile-122. Residue Lys-226 is modified to N6-(pyridoxal phosphate)lysine.

The protein belongs to the SHMT family. In terms of assembly, homodimer. Pyridoxal 5'-phosphate is required as a cofactor.

It is found in the cytoplasm. The catalysed reaction is 5,10-methylenetetrahydromethanopterin + glycine + H2O = 5,6,7,8-tetrahydromethanopterin + L-serine. The protein operates within amino-acid biosynthesis; glycine biosynthesis; glycine from L-serine: step 1/1. Catalyzes the reversible interconversion of serine and glycine with tetrahydromethanopterin (H4MPT) serving as the one-carbon carrier. Also exhibits a pteridine-independent aldolase activity toward beta-hydroxyamino acids, producing glycine and aldehydes, via a retro-aldol mechanism. The polypeptide is Serine hydroxymethyltransferase (Methanopyrus kandleri (strain AV19 / DSM 6324 / JCM 9639 / NBRC 100938)).